Here is a 1368-residue protein sequence, read N- to C-terminus: DNA-directed RNA polymerase subunit beta (1368 aa).

This sequence belongs to the RNA polymerase beta chain family. The RNAP catalytic core consists of 2 alpha, 1 beta, 1 beta' and 1 omega subunit. When a sigma factor is associated with the core the holoenzyme is formed, which can initiate transcription.

The enzyme catalyses RNA(n) + a ribonucleoside 5'-triphosphate = RNA(n+1) + diphosphate. Its function is as follows. DNA-dependent RNA polymerase catalyzes the transcription of DNA into RNA using the four ribonucleoside triphosphates as substrates. This is DNA-directed RNA polymerase subunit beta from Desulfosudis oleivorans (strain DSM 6200 / JCM 39069 / Hxd3) (Desulfococcus oleovorans).